The following is a 422-amino-acid chain: Testin (422 aa).

The region spanning 92–199 is the PET domain; it reads MILTSPVAAK…GDVKLPKEVE (108 aa). A disordered region spans residues 135-165; sequence QPVAGSEGAQYRKKQLAKQLPAHDQDPSKCH. Residues 155–165 show a composition bias toward basic and acidic residues; sequence PAHDQDPSKCH. LIM zinc-binding domains follow at residues 234 to 299, 300 to 359, and 360 to 422; these read YYCF…SEKP, RCAG…NHAV, and SCQG…KMSS.

Belongs to the prickle / espinas / testin family. Expressed in the animal hemisphere at the 4-cell stage. By stage 18, expressed in cells adjacent to the anterior neural plate. In late neurula, expressed in the cranial neural crest. At tail bud stages, expressed strongly in the head, ventral to the developing eye, branchial arches and lateral line placodes. Also localized in the otic vesicle, dorsal fin and notochord with weaker expression at intersomitic junctions of tail bud embryos.

Its subcellular location is the cytoplasm. The protein resides in the cell cortex. It localises to the cell junction. The protein localises to the focal adhesion. Scaffold protein that may play a role in cell adhesion, cell spreading and in the reorganization of the actin cytoskeleton. May inhibit cell growth. Regulates cranial neural crest migration. Acts together with prickle1 to control axial elongation. The protein is Testin of Xenopus laevis (African clawed frog).